The sequence spans 177 residues: Calcineurin subunit B (177 aa).

4 EF-hand domains span residues 25-60, 62-92, 94-129, and 135-170; these read KEIK…AVNP, VKRV…FNAQ, DKQR…MVGN, and QLQQ…QDLE. 20 residues coordinate Ca(2+): Asp38, Asp40, Asn42, Thr44, Glu49, Asp70, Asn72, Asp74, Ser76, Glu81, Asp107, Asp109, Asp111, Tyr113, Glu118, Asp148, Asp150, Asp152, Lys154, and Glu159.

The protein belongs to the calcineurin regulatory subunit family. Composed of a catalytic subunit (A) and a regulatory subunit (B).

Regulatory subunit of calcineurin, a calcium-dependent, calmodulin stimulated protein phosphatase. Confers calcium sensitivity. This chain is Calcineurin subunit B (CNB1), found in Naegleria gruberi (Amoeba).